A 162-amino-acid polypeptide reads, in one-letter code: GTP-dependent dephospho-CoA kinase (162 aa).

Asp-40, Val-41, Val-42, Asp-59, Lys-61, and Glu-111 together coordinate GTP.

Belongs to the GTP-dependent DPCK family.

The catalysed reaction is 3'-dephospho-CoA + GTP = GDP + CoA + H(+). Its pathway is cofactor biosynthesis; coenzyme A biosynthesis. In terms of biological role, catalyzes the GTP-dependent phosphorylation of the 3'-hydroxyl group of dephosphocoenzyme A to form coenzyme A (CoA). This is GTP-dependent dephospho-CoA kinase from Sulfurisphaera tokodaii (strain DSM 16993 / JCM 10545 / NBRC 100140 / 7) (Sulfolobus tokodaii).